A 150-amino-acid polypeptide reads, in one-letter code: Large ribosomal subunit protein bL9 (150 aa).

Belongs to the bacterial ribosomal protein bL9 family.

Its function is as follows. Binds to the 23S rRNA. In Erwinia tasmaniensis (strain DSM 17950 / CFBP 7177 / CIP 109463 / NCPPB 4357 / Et1/99), this protein is Large ribosomal subunit protein bL9.